Consider the following 683-residue polypeptide: Acyl-CoA synthetase short-chain family member 3, mitochondrial (683 aa).

The transit peptide at 1 to 29 directs the protein to the mitochondrion; the sequence is MKPSWLQCRKVTGAGTLGAPLPGSPSVRG. Position 223-226 (223-226) interacts with CoA; sequence EPGR. Residues 421 to 423 and 442 to 447 contribute to the ATP site; these read GER and DHWWQT. An N6-succinyllysine modification is found at lysine 514. The residue at position 520 (lysine 520) is an N6-acetyllysine. ATP is bound by residues aspartate 535, arginine 550, and arginine 561. Arginine 620 is a CoA binding site.

This sequence belongs to the ATP-dependent AMP-binding enzyme family. In terms of tissue distribution, expressed in a wide range of tissues, with the highest levels observed in the liver followed by kidney.

The protein localises to the mitochondrion matrix. The enzyme catalyses acetate + ATP + CoA = acetyl-CoA + AMP + diphosphate. It catalyses the reaction propanoate + ATP + CoA = propanoyl-CoA + AMP + diphosphate. It carries out the reaction butanoate + ATP + CoA = butanoyl-CoA + AMP + diphosphate. Catalyzes the synthesis of acetyl-CoA from short-chain fatty acids. Propionate is the preferred substrate but can also utilize acetate and butyrate with a much lower affinity. This chain is Acyl-CoA synthetase short-chain family member 3, mitochondrial (Acss3), found in Rattus norvegicus (Rat).